The chain runs to 312 residues: Ribonuclease HIII (312 aa).

The RNase H type-2 domain maps to 95–311 (FNCIGSDEAG…REKAQKILKP (217 aa)). A divalent metal cation-binding residues include Asp-101, Glu-102, and Asp-206.

Belongs to the RNase HII family. RnhC subfamily. It depends on Mn(2+) as a cofactor. Requires Mg(2+) as cofactor.

Its subcellular location is the cytoplasm. It catalyses the reaction Endonucleolytic cleavage to 5'-phosphomonoester.. Endonuclease that specifically degrades the RNA of RNA-DNA hybrids. The sequence is that of Ribonuclease HIII from Staphylococcus aureus (strain MSSA476).